The sequence spans 134 residues: uncharacterized protein (134 aa).

Residues 1–16 (MAKAVALLLAAIAASA) form the signal peptide.

This is an uncharacterized protein from Oryza sativa subsp. indica (Rice).